Consider the following 578-residue polypeptide: Arginine--tRNA ligase (578 aa).

A 'HIGH' region motif is present at residues 123 to 133 (PNIAKEMHVGH).

Belongs to the class-I aminoacyl-tRNA synthetase family. As to quaternary structure, monomer.

It is found in the cytoplasm. It carries out the reaction tRNA(Arg) + L-arginine + ATP = L-arginyl-tRNA(Arg) + AMP + diphosphate. The sequence is that of Arginine--tRNA ligase from Baumannia cicadellinicola subsp. Homalodisca coagulata.